Here is a 342-residue protein sequence, read N- to C-terminus: Dihydroorotate dehydrogenase (quinone) (342 aa).

Residues 61 to 65 (AGLDK) and threonine 85 contribute to the FMN site. Lysine 65 is a binding site for substrate. 110 to 114 (NRMGF) serves as a coordination point for substrate. The FMN site is built by asparagine 138 and asparagine 171. Asparagine 171 provides a ligand contact to substrate. Catalysis depends on serine 174, which acts as the Nucleophile. Asparagine 176 is a binding site for substrate. Residues lysine 216 and threonine 244 each contribute to the FMN site. 245–246 (NT) contributes to the substrate binding site. FMN contacts are provided by residues glycine 267, glycine 296, and 317–318 (YS).

The protein belongs to the dihydroorotate dehydrogenase family. Type 2 subfamily. Monomer. Requires FMN as cofactor.

Its subcellular location is the cell membrane. The catalysed reaction is (S)-dihydroorotate + a quinone = orotate + a quinol. Its pathway is pyrimidine metabolism; UMP biosynthesis via de novo pathway; orotate from (S)-dihydroorotate (quinone route): step 1/1. Catalyzes the conversion of dihydroorotate to orotate with quinone as electron acceptor. The polypeptide is Dihydroorotate dehydrogenase (quinone) (Pseudomonas aeruginosa (strain UCBPP-PA14)).